A 454-amino-acid chain; its full sequence is MNKCAIILAAGQGTRIKSKLPKVLHKACGKEMVNHVIDAMRNAEIDDVNVIIGKGAELVKERTTSRNVSYSLQAEQLGTGHAVKCAKDFLEGKTGVVAIFTGDAPLIKPETVKNLVDTHINEKNSATLLTSVIENPTGYGRIVRNGESVEKIVEHKDCNEQEIKIQEINAGMYCFDIESLLTSLEQLSNDNAQGEYYLTDVIEILKKENKKVGAMITDFEETLGVNSRAELAKVESIMRNRINRTHLDNGVTIIDPLNTYIEPEVVIGKDTIIYPGNVIEGKTVIGEDCVLYPNSRINNSTIGNGVEIQSSVILDSKIGDETTVGPFAYVRPESNIGEHVRIGDFVEIKKSTIGNNTKVSHLTYIGDAEVGERCNFGCGTVVVNYDGKKKHKTIIGDDSFIGCNTNLVSPVEVKDNTYIAAGSTITKEVPEGSLAIARAKQQNIEGWVERKKLK.

The pyrophosphorylase stretch occupies residues 1–228; that stretch reads MNKCAIILAA…FEETLGVNSR (228 aa). UDP-N-acetyl-alpha-D-glucosamine-binding positions include 8 to 11, lysine 22, glutamine 73, and 78 to 79; these read LAAG and GT. Aspartate 103 is a binding site for Mg(2+). Positions 140, 154, 169, and 226 each coordinate UDP-N-acetyl-alpha-D-glucosamine. Residue asparagine 226 coordinates Mg(2+). Positions 229–249 are linker; sequence AELAKVESIMRNRINRTHLDN. The segment at 250–454 is N-acetyltransferase; it reads GVTIIDPLNT…EGWVERKKLK (205 aa). Arginine 331 and lysine 349 together coordinate UDP-N-acetyl-alpha-D-glucosamine. The active-site Proton acceptor is histidine 361. Positions 364 and 375 each coordinate UDP-N-acetyl-alpha-D-glucosamine. Acetyl-CoA is bound by residues 384-385, alanine 421, and arginine 438; that span reads NY.

This sequence in the N-terminal section; belongs to the N-acetylglucosamine-1-phosphate uridyltransferase family. In the C-terminal section; belongs to the transferase hexapeptide repeat family. Homotrimer. Requires Mg(2+) as cofactor.

It is found in the cytoplasm. The catalysed reaction is alpha-D-glucosamine 1-phosphate + acetyl-CoA = N-acetyl-alpha-D-glucosamine 1-phosphate + CoA + H(+). It carries out the reaction N-acetyl-alpha-D-glucosamine 1-phosphate + UTP + H(+) = UDP-N-acetyl-alpha-D-glucosamine + diphosphate. The protein operates within nucleotide-sugar biosynthesis; UDP-N-acetyl-alpha-D-glucosamine biosynthesis; N-acetyl-alpha-D-glucosamine 1-phosphate from alpha-D-glucosamine 6-phosphate (route II): step 2/2. It participates in nucleotide-sugar biosynthesis; UDP-N-acetyl-alpha-D-glucosamine biosynthesis; UDP-N-acetyl-alpha-D-glucosamine from N-acetyl-alpha-D-glucosamine 1-phosphate: step 1/1. It functions in the pathway bacterial outer membrane biogenesis; LPS lipid A biosynthesis. In terms of biological role, catalyzes the last two sequential reactions in the de novo biosynthetic pathway for UDP-N-acetylglucosamine (UDP-GlcNAc). The C-terminal domain catalyzes the transfer of acetyl group from acetyl coenzyme A to glucosamine-1-phosphate (GlcN-1-P) to produce N-acetylglucosamine-1-phosphate (GlcNAc-1-P), which is converted into UDP-GlcNAc by the transfer of uridine 5-monophosphate (from uridine 5-triphosphate), a reaction catalyzed by the N-terminal domain. In Clostridium perfringens (strain ATCC 13124 / DSM 756 / JCM 1290 / NCIMB 6125 / NCTC 8237 / Type A), this protein is Bifunctional protein GlmU.